The primary structure comprises 137 residues: Fructose-bisphosphate aldolase C (137 aa).

The Schiff-base intermediate with dihydroxyacetone-P role is filled by Lys-3.

The protein belongs to the class I fructose-bisphosphate aldolase family. In terms of assembly, homotetramer.

It carries out the reaction beta-D-fructose 1,6-bisphosphate = D-glyceraldehyde 3-phosphate + dihydroxyacetone phosphate. Its pathway is carbohydrate degradation; glycolysis; D-glyceraldehyde 3-phosphate and glycerone phosphate from D-glucose: step 4/4. In Gallus gallus (Chicken), this protein is Fructose-bisphosphate aldolase C (ALDOC).